Here is a 486-residue protein sequence, read N- to C-terminus: ATP synthase subunit beta (486 aa).

Residue Gly-164–Thr-171 participates in ATP binding.

It belongs to the ATPase alpha/beta chains family. In terms of assembly, F-type ATPases have 2 components, CF(1) - the catalytic core - and CF(0) - the membrane proton channel. CF(1) has five subunits: alpha(3), beta(3), gamma(1), delta(1), epsilon(1). CF(0) has four main subunits: a(1), b(1), b'(1) and c(9-12).

Its subcellular location is the cellular thylakoid membrane. The catalysed reaction is ATP + H2O + 4 H(+)(in) = ADP + phosphate + 5 H(+)(out). In terms of biological role, produces ATP from ADP in the presence of a proton gradient across the membrane. The catalytic sites are hosted primarily by the beta subunits. This Prochlorococcus marinus (strain AS9601) protein is ATP synthase subunit beta.